The primary structure comprises 66 residues: Phylloseptin-H8 (66 aa).

The first 22 residues, 1 to 22, serve as a signal peptide directing secretion; sequence MAFLKKSLFLVLFLGLVSLSIC. Residues 23 to 44 constitute a propeptide that is removed on maturation; the sequence is EEEKRETEEEENDQEEDDKSEE. The interval 25–44 is disordered; the sequence is EKRETEEEENDQEEDDKSEE. The span at 30–41 shows a compositional bias: acidic residues; that stretch reads EEEENDQEEDDK. Leu-65 is subject to Leucine amide.

As to expression, expressed by the skin glands.

Its subcellular location is the secreted. Has antimicrobial activity. The polypeptide is Phylloseptin-H8 (Pithecopus hypochondrialis (Orange-legged leaf frog)).